A 37-amino-acid chain; its full sequence is Protein 6.3 (37 aa).

This Escherichia phage T7 (Bacteriophage T7) protein is Protein 6.3.